Reading from the N-terminus, the 586-residue chain is Pectinesterase 1 (586 aa).

Residues 1-49 form the signal peptide; sequence MDSVNSFKGYGKVDEAQDLALKKKTRKRLLLLSISVVVLIAVIIAAVVA. Asn57, Asn97, Asn154, Asn201, and Asn207 each carry an N-linked (GlcNAc...) asparagine glycan. The short motif at 250 to 253 is the RRLM cleavage motif element; it reads RRLM. Positions 269-272 match the RRLL cleavage motif motif; it reads RRLL. The substrate site is built by Thr355 and Gln385. Catalysis depends on Asp408, which acts as the Proton donor. Residues Cys422 and Cys442 are joined by a disulfide bond. Asp429 acts as the Nucleophile in catalysis. N-linked (GlcNAc...) asparagine glycosylation occurs at Asn466. Substrate-binding residues include Arg492 and Trp494.

The protein in the N-terminal section; belongs to the PMEI family. This sequence in the C-terminal section; belongs to the pectinesterase family. In terms of assembly, interacts with SBT6.1. Expressed in siliques.

It is found in the secreted. It localises to the cell wall. The protein resides in the golgi apparatus membrane. It carries out the reaction [(1-&gt;4)-alpha-D-galacturonosyl methyl ester](n) + n H2O = [(1-&gt;4)-alpha-D-galacturonosyl](n) + n methanol + n H(+). It participates in glycan metabolism; pectin degradation; 2-dehydro-3-deoxy-D-gluconate from pectin: step 1/5. In terms of biological role, acts in the modification of cell walls via demethylesterification of cell wall pectin. Demethylates protein phosphatase 2A (PP2A) that have been reversibly carboxymethylated by LCMT1. Acts as a negative regulators of genes involved in salt stress response. In Arabidopsis thaliana (Mouse-ear cress), this protein is Pectinesterase 1 (PME1).